A 278-amino-acid chain; its full sequence is HTH-type transcriptional activator RhaS (278 aa).

The HTH araC/xylS-type domain occupies 174–272; that stretch reads NQLMAWLEEH…NWSPRDIRQG (99 aa). DNA-binding regions (H-T-H motif) lie at residues 191–212 and 239–262; these read EAVA…KQHT and VTEI…RREF.

In terms of assembly, binds DNA as a dimer.

Its subcellular location is the cytoplasm. Its function is as follows. Activates expression of the rhaBAD and rhaT operons. The chain is HTH-type transcriptional activator RhaS from Salmonella schwarzengrund (strain CVM19633).